The primary structure comprises 363 residues: S-adenosylmethionine:tRNA ribosyltransferase-isomerase (363 aa).

The protein belongs to the QueA family. Monomer.

It is found in the cytoplasm. The catalysed reaction is 7-aminomethyl-7-carbaguanosine(34) in tRNA + S-adenosyl-L-methionine = epoxyqueuosine(34) in tRNA + adenine + L-methionine + 2 H(+). The protein operates within tRNA modification; tRNA-queuosine biosynthesis. Its function is as follows. Transfers and isomerizes the ribose moiety from AdoMet to the 7-aminomethyl group of 7-deazaguanine (preQ1-tRNA) to give epoxyqueuosine (oQ-tRNA). This Haemophilus influenzae (strain 86-028NP) protein is S-adenosylmethionine:tRNA ribosyltransferase-isomerase.